A 299-amino-acid polypeptide reads, in one-letter code: Ficolin-3 (299 aa).

The signal sequence occupies residues 1–23 (MDLLWILPSLWLLLLGGPACLKT). A disordered region spans residues 44 to 81 (PSCPGAPGSPGEKGAPGPQGPPGPPGKMGPKGEPGDPV). The Collagen-like domain maps to 48–80 (GAPGSPGEKGAPGPQGPPGPPGKMGPKGEPGDP). Hydroxyproline occurs at positions 50, 53, 59, 65, 68, and 77. The segment covering 61-70 (PQGPPGPPGK) has biased composition (pro residues). A Fibrinogen C-terminal domain is found at 84–299 (LRCQEGPRNC…PYRRVRMMLR (216 aa)). Cystine bridges form between cysteine 86-cysteine 110 and cysteine 93-cysteine 121. Asparagine 189 carries an N-linked (GlcNAc...) (complex) asparagine glycan. Positions 237, 239, 241, and 243 each coordinate Ca(2+). Cysteines 245 and 258 form a disulfide. 258–259 (CY) is an a carbohydrate binding site.

It belongs to the ficolin lectin family. In terms of assembly, homotrimer. May form an octadecamer consisting of an elementary trimer unit. Does not interact with fibronectin, elastin or zymosan. Interacts with MASP1 and MASP2. The N-terminus is blocked. In terms of tissue distribution, liver and lung. In liver it is produced by bile duct epithelial cells and hepatocytes. In lung it is produced by both ciliated bronchial epithelial cells and type II alveolar epithelial cells.

Its subcellular location is the secreted. May function in innate immunity through activation of the lectin complement pathway. Calcium-dependent and GlcNAc-binding lectin. Has affinity with GalNAc, GlcNAc, D-fucose, as mono/oligosaccharide and lipopolysaccharides from S.typhimurium and S.minnesota. The sequence is that of Ficolin-3 (FCN3) from Homo sapiens (Human).